A 963-amino-acid chain; its full sequence is SH3 domain-binding protein 4 (963 aa).

In terms of domain architecture, SH3 1 spans 55–114 (GNAKEVIAIKDYCPTNFTTLKFSKGDHLYVLDTSGGEWWYAHNTTEMGYIPSSYVQPLNY). A phosphoserine mark is found at S131, S246, S251, S279, and S296. The region spanning 317–454 (TNIVCKLDSS…LEPCMYVAVV (138 aa)) is the ZU5 domain. The residue at position 637 (S637) is a Phosphoserine. In terms of domain architecture, SH3 2 spans 654–724 (SSLKFGKLLK…HTKNVLVVGR (71 aa)).

Homodimer or homooligomer. Interacts with DNM2, EPS15, clathrin, the adapter protein complex 2/AP-2 and TFRC. Interacts with the Rag GTPases RRAGA, RRAGB, RRAGC and RRAGD; the interaction is most probably direct, preferentially occurs with their inactive GDP-bound form and is negatively regulated by amino acids. In terms of assembly, (Microbial infection) Interacts with molluscum contagiosum virus protein MC159L; this interaction is important for the suppression of autophagy. Post-translationally, phosphorylated upon EGF stimulation. Phosphorylation prevents interaction with DNM2. As to expression, expressed in all tissues tested with higher expression in pancreas. Expressed by retinal pigment epithelial cells (at protein level).

It localises to the membrane. The protein resides in the clathrin-coated pit. It is found in the cytoplasmic vesicle. The protein localises to the clathrin-coated vesicle. Its subcellular location is the nucleus. Functionally, may function in transferrin receptor internalization at the plasma membrane through a cargo-specific control of clathrin-mediated endocytosis. Alternatively, may act as a negative regulator of the amino acid-induced TOR signaling by inhibiting the formation of active Rag GTPase complexes. Preferentially binds inactive Rag GTPase complexes and prevents their interaction with the mTORC1 complex inhibiting its relocalization to lysosomes and its activation. Thereby, may indirectly regulate cell growth, proliferation and autophagy. This is SH3 domain-binding protein 4 (SH3BP4) from Homo sapiens (Human).